Here is a 131-residue protein sequence, read N- to C-terminus: Aspartate 1-decarboxylase (131 aa).

The active-site Schiff-base intermediate with substrate; via pyruvic acid is Ser-25. Residue Ser-25 is modified to Pyruvic acid (Ser). Thr-57 is a binding site for substrate. Catalysis depends on Tyr-58, which acts as the Proton donor. 73 to 75 (GAA) provides a ligand contact to substrate.

The protein belongs to the PanD family. Heterooctamer of four alpha and four beta subunits. Pyruvate serves as cofactor. In terms of processing, is synthesized initially as an inactive proenzyme, which is activated by self-cleavage at a specific serine bond to produce a beta-subunit with a hydroxyl group at its C-terminus and an alpha-subunit with a pyruvoyl group at its N-terminus.

It is found in the cytoplasm. The enzyme catalyses L-aspartate + H(+) = beta-alanine + CO2. Its pathway is cofactor biosynthesis; (R)-pantothenate biosynthesis; beta-alanine from L-aspartate: step 1/1. In terms of biological role, catalyzes the pyruvoyl-dependent decarboxylation of aspartate to produce beta-alanine. This chain is Aspartate 1-decarboxylase, found in Acaryochloris marina (strain MBIC 11017).